Reading from the N-terminus, the 350-residue chain is Nicotinate-nucleotide--dimethylbenzimidazole phosphoribosyltransferase (350 aa).

Glutamate 318 serves as the catalytic Proton acceptor.

The protein belongs to the CobT family.

It carries out the reaction 5,6-dimethylbenzimidazole + nicotinate beta-D-ribonucleotide = alpha-ribazole 5'-phosphate + nicotinate + H(+). It participates in nucleoside biosynthesis; alpha-ribazole biosynthesis; alpha-ribazole from 5,6-dimethylbenzimidazole: step 1/2. Catalyzes the synthesis of alpha-ribazole-5'-phosphate from nicotinate mononucleotide (NAMN) and 5,6-dimethylbenzimidazole (DMB). This Citrifermentans bemidjiense (strain ATCC BAA-1014 / DSM 16622 / JCM 12645 / Bem) (Geobacter bemidjiensis) protein is Nicotinate-nucleotide--dimethylbenzimidazole phosphoribosyltransferase.